We begin with the raw amino-acid sequence, 83 residues long: Small ribosomal subunit protein bS16 (83 aa).

It belongs to the bacterial ribosomal protein bS16 family.

The polypeptide is Small ribosomal subunit protein bS16 (Borrelia duttonii (strain Ly)).